The chain runs to 384 residues: DNA replication and repair protein RecF (384 aa).

Residue 30-37 coordinates ATP; the sequence is GENAQGKT.

The protein belongs to the RecF family.

It is found in the cytoplasm. The RecF protein is involved in DNA metabolism; it is required for DNA replication and normal SOS inducibility. RecF binds preferentially to single-stranded, linear DNA. It also seems to bind ATP. The protein is DNA replication and repair protein RecF of Levilactobacillus brevis (strain ATCC 367 / BCRC 12310 / CIP 105137 / JCM 1170 / LMG 11437 / NCIMB 947 / NCTC 947) (Lactobacillus brevis).